Reading from the N-terminus, the 227-residue chain is Orotidine 5'-phosphate decarboxylase (227 aa).

Substrate contacts are provided by residues Asp-8, Lys-30, 59 to 68, Thr-118, Arg-178, Gln-187, Gly-207, and Arg-208; that span reads DLKLYDIPYT. Catalysis depends on Lys-61, which acts as the Proton donor.

The protein belongs to the OMP decarboxylase family. Type 1 subfamily. In terms of assembly, homodimer.

It catalyses the reaction orotidine 5'-phosphate + H(+) = UMP + CO2. The protein operates within pyrimidine metabolism; UMP biosynthesis via de novo pathway; UMP from orotate: step 2/2. Catalyzes the decarboxylation of orotidine 5'-monophosphate (OMP) to uridine 5'-monophosphate (UMP). In Helicobacter pylori (strain J99 / ATCC 700824) (Campylobacter pylori J99), this protein is Orotidine 5'-phosphate decarboxylase.